A 915-amino-acid chain; its full sequence is MERPRAPPSPLNDAESLSERRSLEIFNPSSGKETHGSTSSSSKPPLDGNNKGSSSKWMEFQDSAKITERTAEWGLSAVKPDSGDDGISFKLSSEVERSKNMSRRSSEESTSSESGAFPRVSQELKTALSTLQQTFVVSDATQPHCPIVYASSGFFTMTGYSSKEIVGRNCRFLQGPDTDKNEVAKIRDCVKNGKSYCGRLLNYKKDGTPFWNLLTVTPIKDDQGNTIKFIGMQVEVSKYTEGVNDKALRPNGLSKSLIRYDARQKEKALDSITEVVQTIRHRKSQVQESVSNDTMVKPDSSTTPTPGRQTRQSDEASKSFRTPGRVSTPTGSKLKSSNNRHEDLLRMEPEELMLSTEVIGQRDSWDLSDRERDIRQGIDLATTLERIEKNFVISDPRLPDNPIIFASDSFLELTEYSREEILGRNCRFLQGPETDQATVQKIRDAIRDQREITVQLINYTKSGKKFWNLFHLQPMRDQKGELQYFIGVQLDGSDHVEPLQNRLSERTEMQSSKLVKATATNVDEAVRELPDANTRPEDLWAAHSKPVYPLPHNKESTSWKAIKKIQASGETVGLHHFKPIKPLGSGDTGSVHLVELKGTGELYAMKAMEKTMMLNRNKAHRACIEREIISLLDHPFLPTLYASFQTSTHVCLITDFCPGGELFALLDRQPMKILTEDSARFYAAEVVIGLEYLHCLGIVYRDLKPENILLKKDGHIVLADFDLSFMTTCTPQLIIPAAPSKRRRSKSQPLPTFVAEPSTQSNSFVGTEEYIAPEIITGAGHTSAIDWWALGILLYEMLYGRTPFRGKNRQKTFANILHKDLTFPSSIPVSLVGRQLINTLLNRDPSSRLGSKGGANEIKQHAFFRGINWPLIRGMSPPPLDAPLSIIEKDPNAKDIKWEDDGVLVNSTDLDIDLF.

Positions 1–10 are enriched in pro residues; it reads MERPRAPPSP. Disordered regions lie at residues 1–62 and 84–118; these read MERP…EFQD and DDGISFKLSSEVERSKNMSRRSSEESTSSESGAFP. Phosphoserine is present on residues S9 and S22. Residues 27 to 43 show a composition bias toward polar residues; that stretch reads NPSSGKETHGSTSSSSK. A compositionally biased stretch (basic and acidic residues) spans 93 to 107; the sequence is SEVERSKNMSRRSSE. The 74-residue stretch at 120-193 folds into the PAS 1 domain; that stretch reads VSQELKTALS…AKIRDCVKNG (74 aa). S121 carries the post-translational modification Phosphoserine. N169 contacts FMN. The residue at position 170 (C170) is an S-4a-FMN cysteine. Residues R171, Q174, R187, N202, N212, Q233, and K238 each coordinate FMN. A PAC 1 domain is found at 194 to 248; the sequence is KSYCGRLLNYKKDGTPFWNLLTVTPIKDDQGNTIKFIGMQVEVSKYTEGVNDKAL. Residues 281–344 are disordered; sequence HRKSQVQESV…KSSNNRHEDL (64 aa). Composition is skewed to polar residues over residues 286 to 310 and 325 to 337; these read VQESVSNDTMVKPDSSTTPTPGRQT and RVSTPTGSKLKSS. Phosphoserine is present on S364. In terms of domain architecture, PAS 2 spans 376–449; the sequence is QGIDLATTLE…QKIRDAIRDQ (74 aa). FMN is bound at residue N425. C426 is modified (S-4a-FMN cysteine). Residues R427, Q430, R443, N458, N468, F470, and Q489 each contribute to the FMN site. A PAC 2 domain is found at 450–504; sequence REITVQLINYTKSGKKFWNLFHLQPMRDQKGELQYFIGVQLDGSDHVEPLQNRLS. The Protein kinase domain occupies 577 to 864; that stretch reads FKPIKPLGSG…ANEIKQHAFF (288 aa). ATP is bound by residues 583–591 and K606; that span reads LGSGDTGSV. The Proton acceptor role is filled by D702. The interval 720-774 is activation loop; that stretch reads DFDLSFMTTCTPQLIIPAAPSKRRRSKSQPLPTFVAEPSTQSNSFVGTEEYIAPE.

Belongs to the protein kinase superfamily. AGC Ser/Thr protein kinase family. Homodimer. Interacts with PKS1, PKS2, RPT3 and PHOT1. Associates with CBC1 and CBC2. Binds to BHP. The cofactor is FMN. Autophosphorylated in response to blue light irradiation. Post-translationally, 2 molecules of FMN bind covalently to cysteines after exposure to blue light and are reversed in the dark. As to expression, expressed in leaves, stems and flowers, and to a lower extent in roots. Present in guard cells (at protein level).

Its subcellular location is the cell membrane. The enzyme catalyses L-seryl-[protein] + ATP = O-phospho-L-seryl-[protein] + ADP + H(+). The catalysed reaction is L-threonyl-[protein] + ATP = O-phospho-L-threonyl-[protein] + ADP + H(+). Autophosphorylation is inhibited by staurosporine, but not by tyrphostin 9, sphingosine, GW5074 and BML-265. Protein kinase that acts as a blue light photoreceptor in a signal-transduction pathway for photo-induced movements. Triggers the phosphorylation of AHA1 and AHA2 C-terminal penultimate Thr in guard cells to activate them and induce stomatal opening in response to blue light (BL). Also phosphorylates BLUS1, a kinase involved in stomatal opening. Mediates calcium spiking of extra- and intracellular origins in response to blue light. Involved in hypocotyl phototropism. Contributes to the chloroplast accumulation in low blue light and mediates their translocation (avoidance response) at high fluence. Regulates stomata opening and photomorphogenesis response of leaf tissue. Not involved in hypocotyl elongation inhibition, anthocyanin accumulation or cotyledon opening. The protein is Phototropin-2 of Arabidopsis thaliana (Mouse-ear cress).